Reading from the N-terminus, the 49-residue chain is Lectin alpha chain (49 aa).

Belongs to the leguminous lectin family. In terms of assembly, homotetramer. In terms of processing, the beta and gamma chains are produced by partial proteolytic processing of the lectin alpha chain by an asparaginyl endopeptidase. Mixture of 60% alpha lectin and 40% of its beta and gamma proteolytic fragments. Seed.

Functionally, D-mannose/D-glucose-binding lectin. This chain is Lectin alpha chain, found in Dioclea violacea.